We begin with the raw amino-acid sequence, 142 residues long: Cystatin-8 (142 aa).

The signal sequence occupies residues 1 to 19 (MAKPLWLSLILFIIPVALA). An N-linked (GlcNAc...) asparagine glycan is attached at Asn39. The Secondary area of contact signature appears at 77-81 (QITDR). 2 cysteine pairs are disulfide-bonded: Cys95-Cys105 and Cys119-Cys139. Asn100 carries N-linked (GlcNAc...) asparagine glycosylation.

The protein belongs to the cystatin family. Proximal caput region of the epididymis. Lower expression in the testis. Within the testis it is localized to the elongating spermatids, whereas within the epididymis it is exclusively synthesized by the proximal caput epithelium.

It is found in the secreted. Functionally, performs a specialized role during sperm development and maturation. This is Cystatin-8 (Cst8) from Mus musculus (Mouse).